The following is a 129-amino-acid chain: S-adenosylmethionine decarboxylase proenzyme (129 aa).

Ser63 acts as the Schiff-base intermediate with substrate; via pyruvic acid in catalysis. Ser63 is subject to Pyruvic acid (Ser); by autocatalysis. His68 (proton acceptor; for processing activity) is an active-site residue. Cys83 serves as the catalytic Proton donor; for catalytic activity.

Belongs to the prokaryotic AdoMetDC family. Type 1 subfamily. As to quaternary structure, heterotetramer of two alpha and two beta chains arranged as a dimer of alpha/beta heterodimers. Pyruvate serves as cofactor. In terms of processing, is synthesized initially as an inactive proenzyme. Formation of the active enzyme involves a self-maturation process in which the active site pyruvoyl group is generated from an internal serine residue via an autocatalytic post-translational modification. Two non-identical subunits are generated from the proenzyme in this reaction, and the pyruvate is formed at the N-terminus of the alpha chain, which is derived from the carboxyl end of the proenzyme. The post-translation cleavage follows an unusual pathway, termed non-hydrolytic serinolysis, in which the side chain hydroxyl group of the serine supplies its oxygen atom to form the C-terminus of the beta chain, while the remainder of the serine residue undergoes an oxidative deamination to produce ammonia and the pyruvoyl group blocking the N-terminus of the alpha chain.

It carries out the reaction S-adenosyl-L-methionine + H(+) = S-adenosyl 3-(methylsulfanyl)propylamine + CO2. It functions in the pathway amine and polyamine biosynthesis; S-adenosylmethioninamine biosynthesis; S-adenosylmethioninamine from S-adenosyl-L-methionine: step 1/1. Catalyzes the decarboxylation of S-adenosylmethionine to S-adenosylmethioninamine (dcAdoMet), the propylamine donor required for the synthesis of the polyamines spermine and spermidine from the diamine putrescine. The protein is S-adenosylmethionine decarboxylase proenzyme of Shouchella clausii (strain KSM-K16) (Alkalihalobacillus clausii).